We begin with the raw amino-acid sequence, 275 residues long: MQQIQRDIAQALQVQPPFQSEADVQAQIARRIAFIQQCLKDAGLKTLVLGISGGVDSLTAGLLAQRAVEQLREQTGDQAYRFIAVRLPYQVQQDEADAQASLATIRADEEQTVNIGPSVKALAEQLEALEGLEPAKSDFVIGNIKARIRMVAQYAIAGARGGLVIGTDHAAEAVMGFFTKFGDGACDLAPLSGLAKHQVRALARALGAPENLVEKIPTADLEDLRPGHPDEASHGVTYAEIDAFLHGQPLREEAARVIVDTYHKTQHKRELPKAP.

50-57 (GISGGVDS) provides a ligand contact to ATP. Asp56 contributes to the Mg(2+) binding site. Arg147 serves as a coordination point for deamido-NAD(+). Position 167 (Thr167) interacts with ATP. Residue Glu172 coordinates Mg(2+). Deamido-NAD(+) is bound by residues Lys180 and Asp187. ATP is bound by residues Lys196 and Thr218. Residue 267 to 268 (HK) participates in deamido-NAD(+) binding.

The protein belongs to the NAD synthetase family. In terms of assembly, homodimer.

The catalysed reaction is deamido-NAD(+) + NH4(+) + ATP = AMP + diphosphate + NAD(+) + H(+). Its pathway is cofactor biosynthesis; NAD(+) biosynthesis; NAD(+) from deamido-NAD(+) (ammonia route): step 1/1. Catalyzes the ATP-dependent amidation of deamido-NAD to form NAD. Uses ammonia as a nitrogen source. This Pseudomonas aeruginosa (strain UCBPP-PA14) protein is NH(3)-dependent NAD(+) synthetase.